We begin with the raw amino-acid sequence, 387 residues long: S-adenosylmethionine synthase (387 aa).

His16 lines the ATP pocket. Asp18 contacts Mg(2+). Glu44 is a K(+) binding site. Glu57 and Gln100 together coordinate L-methionine. The segment at 100–110 (QSADIAVGVDE) is flexible loop. ATP contacts are provided by residues 165-167 (DAK), Asp241, 247-248 (RK), Ala264, and Lys268. Asp241 lines the L-methionine pocket. Position 272 (Lys272) interacts with L-methionine.

The protein belongs to the AdoMet synthase family. Homotetramer; dimer of dimers. Requires Mg(2+) as cofactor. It depends on K(+) as a cofactor.

It is found in the cytoplasm. It catalyses the reaction L-methionine + ATP + H2O = S-adenosyl-L-methionine + phosphate + diphosphate. The protein operates within amino-acid biosynthesis; S-adenosyl-L-methionine biosynthesis; S-adenosyl-L-methionine from L-methionine: step 1/1. In terms of biological role, catalyzes the formation of S-adenosylmethionine (AdoMet) from methionine and ATP. The overall synthetic reaction is composed of two sequential steps, AdoMet formation and the subsequent tripolyphosphate hydrolysis which occurs prior to release of AdoMet from the enzyme. The chain is S-adenosylmethionine synthase from Marinomonas sp. (strain MWYL1).